The sequence spans 253 residues: Transcription factor ORG2 (253 aa).

The 53-residue stretch at 71–123 folds into the bHLH domain; it reads VKKLNHNASERDRRKKINTLFSSLRSCLPASDQSKKLSIPETVSKSLKYIPEL.

In terms of assembly, homodimer. Roots.

It localises to the nucleus. In Arabidopsis thaliana (Mouse-ear cress), this protein is Transcription factor ORG2 (ORG2).